The sequence spans 312 residues: RNA binding protein fox-1 homolog 3 (312 aa).

Over residues 1–29 (MAQPYPPAQYPPPPQNGIPAEYAPPPPHP) the composition is skewed to pro residues. Residues 1–104 (MAQPYPPAQY…KQQPKRLHVS (104 aa)) are disordered. Positions 49–87 (TPAQTHPEQPGSEASTQPIAGTQTVPQTDEAAQTDSQPL) are enriched in polar residues. One can recognise an RRM domain in the interval 100 to 175 (RLHVSNIPFR…RKIEVNNATA (76 aa)). R223 bears the Asymmetric dimethylarginine; alternate mark. An Omega-N-methylarginine; alternate modification is found at R223. At R272 the chain carries Asymmetric dimethylarginine.

It is found in the nucleus. Its subcellular location is the cytoplasm. Functionally, pre-mRNA alternative splicing regulator. Regulates alternative splicing of RBFOX2 to enhance the production of mRNA species that are targeted for nonsense-mediated decay (NMD). The sequence is that of RNA binding protein fox-1 homolog 3 (RBFOX3) from Homo sapiens (Human).